A 197-amino-acid polypeptide reads, in one-letter code: MKVKMSKLIILSGPSGVGKGTIESLLLKNKNLLIKLAISATTREKRRDEINGVNYFFLTVQEFKEKIENDEFIEWSCHFNNYYGTLKSQIKFIQSQNFIPLLEIDTTGAKNIIENYKNKGELSQLLTIFILPPSIESLKNRIQKRLTETNIQINQRLEKAKAEIKIKNLFKFQVVNDNLEECVAQIEKIISKEIQKT.

The region spanning 6–191 (SKLIILSGPS…CVAQIEKIIS (186 aa)) is the Guanylate kinase-like domain. Position 13–20 (13–20 (GPSGVGKG)) interacts with ATP.

This sequence belongs to the guanylate kinase family.

It localises to the cytoplasm. It catalyses the reaction GMP + ATP = GDP + ADP. Its function is as follows. Essential for recycling GMP and indirectly, cGMP. In Mesomycoplasma hyopneumoniae (strain 232) (Mycoplasma hyopneumoniae), this protein is Guanylate kinase.